Here is a 350-residue protein sequence, read N- to C-terminus: Serine-threonine kinase receptor-associated protein (350 aa).

7 WD repeats span residues 12–56 (GHTR…GTFL), 57–96 (GHKG…ELMT), 98–137 (AHKH…AEPK), 141–179 (GHTS…EVKS), 180–212 (LNFN…HSAV), 221–262 (EAPA…ESYK), and 263–302 (GHFG…TYGL). Phosphoserine occurs at positions 312, 335, and 338. The disordered stretch occupies residues 327-350 (EEELEEIASENSDSIYSSTPEVKA). The segment covering 337–350 (NSDSIYSSTPEVKA) has biased composition (polar residues). Position 342 is a phosphotyrosine (Tyr342).

The protein belongs to the WD repeat STRAP family. Part of the core SMN complex that contains SMN1, GEMIN2/SIP1, DDX20/GEMIN3, GEMIN4, GEMIN5, GEMIN6, GEMIN7, GEMIN8 and STRAP/UNRIP. Part of the SMN-Sm complex that contains SMN1, GEMIN2/SIP1, DDX20/GEMIN3, GEMIN4, GEMIN5, GEMIN6, GEMIN7, GEMIN8, STRAP/UNRIP and the Sm proteins SNRPB, SNRPD1, SNRPD2, SNRPD3, SNRPE, SNRPF and SNRPG. Interacts directly with GEMIN6 and GEMIN7. Associates with the SMN complex in the cytoplasm but not in the nucleus. Also interacts with CSDE1/UNR and MAWBP. Interacts with PDPK1. Interacts with TRIM48.

The protein resides in the cytoplasm. It is found in the nucleus. Functionally, the SMN complex catalyzes the assembly of small nuclear ribonucleoproteins (snRNPs), the building blocks of the spliceosome, and thereby plays an important role in the splicing of cellular pre-mRNAs. Most spliceosomal snRNPs contain a common set of Sm proteins SNRPB, SNRPD1, SNRPD2, SNRPD3, SNRPE, SNRPF and SNRPG that assemble in a heptameric protein ring on the Sm site of the small nuclear RNA to form the core snRNP (Sm core). In the cytosol, the Sm proteins SNRPD1, SNRPD2, SNRPE, SNRPF and SNRPG are trapped in an inactive 6S pICln-Sm complex by the chaperone CLNS1A that controls the assembly of the core snRNP. To assemble core snRNPs, the SMN complex accepts the trapped 5Sm proteins from CLNS1A forming an intermediate. Binding of snRNA inside 5Sm triggers eviction of the SMN complex, thereby allowing binding of SNRPD3 and SNRPB to complete assembly of the core snRNP. STRAP plays a role in the cellular distribution of the SMN complex. Negatively regulates TGF-beta signaling but positively regulates the PDPK1 kinase activity by enhancing its autophosphorylation and by significantly reducing the association of PDPK1 with 14-3-3 protein. This chain is Serine-threonine kinase receptor-associated protein (STRAP), found in Bos taurus (Bovine).